The following is a 112-amino-acid chain: Integration host factor subunit alpha (112 aa).

It belongs to the bacterial histone-like protein family. As to quaternary structure, heterodimer of an alpha and a beta chain.

Functionally, this protein is one of the two subunits of integration host factor, a specific DNA-binding protein that functions in genetic recombination as well as in transcriptional and translational control. In Agrobacterium fabrum (strain C58 / ATCC 33970) (Agrobacterium tumefaciens (strain C58)), this protein is Integration host factor subunit alpha.